A 96-amino-acid chain; its full sequence is Protein Vpr (96 aa).

Positions 1 to 42 (MEQAPEDQGPQREPYNEWALELLEELKNEAVRHFPRLWLHGL) are homooligomerization. Phosphoserine; by host is present on residues Ser-79 and Ser-96.

The protein belongs to the HIV-1 VPR protein family. Homooligomer, may form homodimer. Interacts with p6-gag region of the Pr55 Gag precursor protein through a (Leu-X-X)4 motif near the C-terminus of the P6gag protein. Interacts with host UNG. May interact with host RAD23A/HHR23A. Interacts with host VPRBP/DCAF1, leading to hijack the CUL4A-RBX1-DDB1-DCAF1/VPRBP complex, mediating ubiquitination of host proteins such as TERT and ZGPAT and arrest of the cell cycle in G2 phase. Post-translationally, phosphorylated on several residues by host. These phosphorylations regulate VPR activity for the nuclear import of the HIV-1 pre-integration complex.

The protein resides in the virion. It localises to the host nucleus. It is found in the host extracellular space. During virus replication, may deplete host UNG protein, and incude G2-M cell cycle arrest. Acts by targeting specific host proteins for degradation by the 26S proteasome, through association with the cellular CUL4A-DDB1 E3 ligase complex by direct interaction with host VPRPB/DCAF-1. Cell cycle arrest reportedly occurs within hours of infection and is not blocked by antiviral agents, suggesting that it is initiated by the VPR carried into the virion. Additionally, VPR induces apoptosis in a cell cycle dependent manner suggesting that these two effects are mechanistically linked. Detected in the serum and cerebrospinal fluid of AIDS patient, VPR may also induce cell death to bystander cells. In terms of biological role, during virus entry, plays a role in the transport of the viral pre-integration (PIC) complex to the host nucleus. This function is crucial for viral infection of non-dividing macrophages. May act directly at the nuclear pore complex, by binding nucleoporins phenylalanine-glycine (FG)-repeat regions. This chain is Protein Vpr, found in Human immunodeficiency virus type 1 group M subtype G (isolate SE6165) (HIV-1).